We begin with the raw amino-acid sequence, 282 residues long: Protein-glutamine deamidase Cif (282 aa).

Residues 1–16 form a translocation domain (TD) region; sequence MKDITLPPPTSASCLT. Residues Cys-109, His-165, and Gln-185 contribute to the active site.

This sequence belongs to the Cif family.

It is found in the secreted. It localises to the host nucleus. It catalyses the reaction L-glutaminyl-[protein] + H2O = L-glutamyl-[protein] + NH4(+). Its function is as follows. Protein-glutamine deamidase effector that inhibits the host cell cycle and other key cellular processes such as the actin network and programmed-cell death. Acts by mediating the side chain deamidation of 'Gln-40' of host NEDD8, converting it to glutamate, thereby abolishing the activity of cullin-RING-based E3 ubiquitin-protein ligase complexes (CRL complexes). Inactivation of CRL complexes prevents ubiquitination and subsequent degradation of the cyclin-dependent kinase inhibitors CDKN1A/p21 and CDKN1B/p27, leading to G1 and G2 cell cycle arrests in host cells. Also able to catalyze deamidation of 'Gln-40' of host ubiquitin in vitro; however, NEDD8 constitutes the preferred substrate in vivo. The polypeptide is Protein-glutamine deamidase Cif (Escherichia coli).